Reading from the N-terminus, the 396-residue chain is Alanine racemase (396 aa).

The active-site Proton acceptor; specific for D-alanine is K46. N6-(pyridoxal phosphate)lysine is present on K46. Residue R145 coordinates substrate. Y280 serves as the catalytic Proton acceptor; specific for L-alanine. A substrate-binding site is contributed by M328.

This sequence belongs to the alanine racemase family. Requires pyridoxal 5'-phosphate as cofactor.

It carries out the reaction L-alanine = D-alanine. The protein operates within amino-acid biosynthesis; D-alanine biosynthesis; D-alanine from L-alanine: step 1/1. Its function is as follows. Catalyzes the interconversion of L-alanine and D-alanine. May also act on other amino acids. This Brucella abortus (strain 2308) protein is Alanine racemase (alr).